Consider the following 309-residue polypeptide: Aspartate carbamoyltransferase catalytic subunit (309 aa).

2 residues coordinate carbamoyl phosphate: R58 and T59. Residue K86 coordinates L-aspartate. Residues R108, H136, and Q139 each contribute to the carbamoyl phosphate site. The L-aspartate site is built by R170 and R224. G266 and P267 together coordinate carbamoyl phosphate.

The protein belongs to the aspartate/ornithine carbamoyltransferase superfamily. ATCase family. As to quaternary structure, heterododecamer (2C3:3R2) of six catalytic PyrB chains organized as two trimers (C3), and six regulatory PyrI chains organized as three dimers (R2).

It catalyses the reaction carbamoyl phosphate + L-aspartate = N-carbamoyl-L-aspartate + phosphate + H(+). Its pathway is pyrimidine metabolism; UMP biosynthesis via de novo pathway; (S)-dihydroorotate from bicarbonate: step 2/3. Functionally, catalyzes the condensation of carbamoyl phosphate and aspartate to form carbamoyl aspartate and inorganic phosphate, the committed step in the de novo pyrimidine nucleotide biosynthesis pathway. This chain is Aspartate carbamoyltransferase catalytic subunit, found in Campylobacter curvus (strain 525.92).